The primary structure comprises 491 residues: NADH-ubiquinone oxidoreductase chain 2 (491 aa).

The next 14 membrane-spanning stretches (helical) occupy residues 11 to 31 (MIKY…SISI), 38 to 58 (VHII…VIGI), 74 to 94 (ELIK…IKMF), 106 to 126 (ITDE…ISME), 129 to 149 (NLIT…ILAL), 161 to 181 (LKYY…IVSI), 210 to 230 (IALI…HGWL), 238 to 258 (GMLM…MVLI), 270 to 290 (AIMF…VGTI), 298 to 318 (LIRF…LMLA), 330 to 350 (VYYL…IMGF), 375 to 395 (GAIV…MTNF), 411 to 433 (VYLT…NLVK), and 463 to 483 (IVLG…ILNV).

This sequence belongs to the complex I subunit 2 family.

It localises to the mitochondrion inner membrane. The enzyme catalyses a ubiquinone + NADH + 5 H(+)(in) = a ubiquinol + NAD(+) + 4 H(+)(out). Core subunit of the mitochondrial membrane respiratory chain NADH dehydrogenase (Complex I) that is believed to belong to the minimal assembly required for catalysis. Complex I functions in the transfer of electrons from NADH to the respiratory chain. The immediate electron acceptor for the enzyme is believed to be ubiquinone. This is NADH-ubiquinone oxidoreductase chain 2 (nad2) from Dictyostelium citrinum (Slime mold).